The following is a 739-amino-acid chain: MPNMEPTTKEIKEQKIYQEMGLTDSEYELVCSILGREPNYTETGLFSVMWSEHCSYKNSKPVLRKFPTEGKQVLQGPGEGAGIVDIGDGLGVAFKVESHNHPSYVEPYQGAATGVGGIIRDVFSMGARPIAMLNSLRFGELDTPHAKYLVSEVVAGIAGYGNSIGIPTVGGEIQFDPCYTKNPLVNAMCVGLIEAKDIQKGQAKGIGNPVMYVGAKTGRDGIHGATFASVEFSEEGEQQRSAVQVGDPFMEKLLLEACLDVIRDHSDILVGIQDMGAAGLVSSSSEMASKAGAGLELIMDDVPQRELHMTPYEMLLSESQERMLLCVKKGHVEEIQALFERYGLEAVVIGQVTDDKMYKIIHHGEVVANVPVDALAEDAPVYHKPSKEPTRYQAFQEEEAFVPAMDDVVGVWKELLAQPTIASKRHIYEQYDYQVRTDTAVVPGSDAAIVRVRGTEKAIAMTTDCNSRYLYLDPEVGGAIAVAEAARNIVCSGGKPLAITDGLNFGNPEKPEIFWEIEKAADGISAACLELDTPVISGNVSLYNETDGTGIYPTPVIGMVGLVEDLAHITTQDFKNSGDVIFLIGETKAEYSGSELQKLQQGKISGRAPELDLVTEKKYQQLLLTAIQEGLVASSHDLAEGGFGVALAEATFKAGLGAEVEVPFALNQLFSESQSRFLVSVKPENEAAFAQLMELEKVYRLGVVTEDDTIRVKHKEDQVTAKTTELRSIWEGAIPCLLK.

Histidine 53 is an active-site residue. Tyrosine 56 and lysine 95 together coordinate ATP. A Mg(2+)-binding site is contributed by glutamate 97. Residues 98–101 and arginine 120 contribute to the substrate site; that span reads SHNH. Residue histidine 99 is the Proton acceptor of the active site. Aspartate 121 contacts Mg(2+). Residue glutamine 244 participates in substrate binding. Aspartate 274 lines the Mg(2+) pocket. 318-320 provides a ligand contact to substrate; the sequence is ESQ. The ATP site is built by aspartate 501 and glycine 538. Position 539 (asparagine 539) interacts with Mg(2+). Serine 541 is a substrate binding site.

The protein belongs to the FGAMS family. In terms of assembly, monomer. Part of the FGAM synthase complex composed of 1 PurL, 1 PurQ and 2 PurS subunits.

Its subcellular location is the cytoplasm. The enzyme catalyses N(2)-formyl-N(1)-(5-phospho-beta-D-ribosyl)glycinamide + L-glutamine + ATP + H2O = 2-formamido-N(1)-(5-O-phospho-beta-D-ribosyl)acetamidine + L-glutamate + ADP + phosphate + H(+). Its pathway is purine metabolism; IMP biosynthesis via de novo pathway; 5-amino-1-(5-phospho-D-ribosyl)imidazole from N(2)-formyl-N(1)-(5-phospho-D-ribosyl)glycinamide: step 1/2. Its function is as follows. Part of the phosphoribosylformylglycinamidine synthase complex involved in the purines biosynthetic pathway. Catalyzes the ATP-dependent conversion of formylglycinamide ribonucleotide (FGAR) and glutamine to yield formylglycinamidine ribonucleotide (FGAM) and glutamate. The FGAM synthase complex is composed of three subunits. PurQ produces an ammonia molecule by converting glutamine to glutamate. PurL transfers the ammonia molecule to FGAR to form FGAM in an ATP-dependent manner. PurS interacts with PurQ and PurL and is thought to assist in the transfer of the ammonia molecule from PurQ to PurL. This chain is Phosphoribosylformylglycinamidine synthase subunit PurL, found in Listeria monocytogenes serovar 1/2a (strain ATCC BAA-679 / EGD-e).